Consider the following 154-residue polypeptide: UPF0178 protein BAV3236 (154 aa).

Belongs to the UPF0178 family.

This chain is UPF0178 protein BAV3236, found in Bordetella avium (strain 197N).